The chain runs to 211 residues: Ribonuclease HII (211 aa).

An RNase H type-2 domain is found at 16-205 (APVCGVDEAG…VKAALAAAAV (190 aa)). Residues Asp-22, Glu-23, and Asp-114 each contribute to the a divalent metal cation site.

This sequence belongs to the RNase HII family. Mn(2+) serves as cofactor. The cofactor is Mg(2+).

Its subcellular location is the cytoplasm. The enzyme catalyses Endonucleolytic cleavage to 5'-phosphomonoester.. Functionally, endonuclease that specifically degrades the RNA of RNA-DNA hybrids. This Caulobacter vibrioides (strain ATCC 19089 / CIP 103742 / CB 15) (Caulobacter crescentus) protein is Ribonuclease HII (rnhB).